A 644-amino-acid chain; its full sequence is Exoribonuclease 2 (644 aa).

One can recognise an RNB domain in the interval 189–516 (REDLTALDFV…NHRLLKAVIK (328 aa)). One can recognise an S1 motif domain in the interval 561–643 (DTRFAAEIVD…ETRSIIARPV (83 aa)).

Belongs to the RNR ribonuclease family. RNase II subfamily.

The protein resides in the cytoplasm. The catalysed reaction is Exonucleolytic cleavage in the 3'- to 5'-direction to yield nucleoside 5'-phosphates.. In terms of biological role, involved in mRNA degradation. Hydrolyzes single-stranded polyribonucleotides processively in the 3' to 5' direction. This chain is Exoribonuclease 2, found in Escherichia coli (strain UTI89 / UPEC).